A 361-amino-acid polypeptide reads, in one-letter code: Phosphoserine aminotransferase (361 aa).

Residue Arg43 coordinates L-glutamate. Pyridoxal 5'-phosphate contacts are provided by residues 77–78 (AS), Trp103, Thr153, Asp173, and Gln196. Lys197 carries the post-translational modification N6-(pyridoxal phosphate)lysine. 238 to 239 (NT) is a binding site for pyridoxal 5'-phosphate.

The protein belongs to the class-V pyridoxal-phosphate-dependent aminotransferase family. SerC subfamily. Homodimer. Pyridoxal 5'-phosphate is required as a cofactor.

It is found in the cytoplasm. The enzyme catalyses O-phospho-L-serine + 2-oxoglutarate = 3-phosphooxypyruvate + L-glutamate. It catalyses the reaction 4-(phosphooxy)-L-threonine + 2-oxoglutarate = (R)-3-hydroxy-2-oxo-4-phosphooxybutanoate + L-glutamate. It functions in the pathway amino-acid biosynthesis; L-serine biosynthesis; L-serine from 3-phospho-D-glycerate: step 2/3. Its pathway is cofactor biosynthesis; pyridoxine 5'-phosphate biosynthesis; pyridoxine 5'-phosphate from D-erythrose 4-phosphate: step 3/5. In terms of biological role, catalyzes the reversible conversion of 3-phosphohydroxypyruvate to phosphoserine and of 3-hydroxy-2-oxo-4-phosphonooxybutanoate to phosphohydroxythreonine. This chain is Phosphoserine aminotransferase, found in Pseudomonas fluorescens (strain SBW25).